Consider the following 317-residue polypeptide: MARRSKGRFIDGIVLLDKATGMSSNFALQRVKRFFNANKAGHTGALDPLATGMLPICLGEATKFSQHLLDSDKRYLVTAKLGQRTDTSDSDGEVVQTRPIEFTEAQLMSALEHFRGDTLQVPSMYSALKYQGQPLYKYAREGIEVPREARPITVFELNFISLEGDELTLDIHCSKGTYIRTIIDDLGEMLGCGAHVIMLRRTQVAHYPYDKMVTLEQLEALVAKAQEEQLDPSSLLDSLLLPMDTAVADFPEVNVPDASAAYLMQGQAVRVSGLVADKLVRITLGTERRFVGIGEMNEDGLLAPKRLVVIHDQAKAS.

Aspartate 47 serves as the catalytic Nucleophile.

It belongs to the pseudouridine synthase TruB family. Type 1 subfamily.

The catalysed reaction is uridine(55) in tRNA = pseudouridine(55) in tRNA. Responsible for synthesis of pseudouridine from uracil-55 in the psi GC loop of transfer RNAs. The chain is tRNA pseudouridine synthase B from Shewanella sp. (strain MR-4).